The following is a 248-amino-acid chain: mRNA-decapping protein OPG122 (248 aa).

Residues 45–227 (HKRVSVSAIL…IAKYALDTAK (183 aa)) form the Nudix hydrolase domain. A Nudix box motif is present at residues 126–147 (GIPKRGENVPECLSREIKEEVN). Residue Glu132 participates in Mg(2+) binding. The Nucleophile role is filled by Glu141. Residue Glu145 participates in Mn(2+) binding. Residue Asp167 coordinates Mg(2+).

This sequence belongs to the Nudix hydrolase family. Mg(2+) is required as a cofactor. Mn(2+) serves as cofactor.

It is found in the host mitochondrion. Its function is as follows. Decapping enzyme that remove the protective 5'-cap from both host and viral mRNAs to commit transcripts for decay by the cellular exonuclease XRN1. Preferentially targets spliced mRNAs and since all viral genes are intronless, it preferentially targets host over viral transcripts. Acceleration of the turnover of cellular transcripts promotes the shutoff of host protein synthesis and therefore diminish the magnitude of antiviral response. This chain is mRNA-decapping protein OPG122 (OPG122), found in Vaccinia virus (strain Copenhagen) (VACV).